Reading from the N-terminus, the 465-residue chain is ATP-sulfurylase 3, chloroplastic (465 aa).

A chloroplast-targeting transit peptide spans 1–49 (MASMSTVFPKPTSFISQPLTKSHKSDSVTTSISFPSNSKTRSLRTISVR).

This sequence belongs to the sulfate adenylyltransferase family. Homotetramer.

Its subcellular location is the plastid. It localises to the chloroplast stroma. It carries out the reaction sulfate + ATP + H(+) = adenosine 5'-phosphosulfate + diphosphate. It functions in the pathway sulfur metabolism; hydrogen sulfide biosynthesis; sulfite from sulfate: step 1/3. This is ATP-sulfurylase 3, chloroplastic (APS3) from Arabidopsis thaliana (Mouse-ear cress).